A 138-amino-acid chain; its full sequence is Holo-[acyl-carrier-protein] synthase (138 aa).

2 residues coordinate Mg(2+): D8 and E54.

The protein belongs to the P-Pant transferase superfamily. AcpS family. Mg(2+) is required as a cofactor.

The protein localises to the cytoplasm. The enzyme catalyses apo-[ACP] + CoA = holo-[ACP] + adenosine 3',5'-bisphosphate + H(+). Its function is as follows. Transfers the 4'-phosphopantetheine moiety from coenzyme A to a Ser of acyl-carrier-protein. The sequence is that of Holo-[acyl-carrier-protein] synthase from Roseiflexus sp. (strain RS-1).